The following is a 217-amino-acid chain: Cytochrome c biogenesis ATP-binding export protein CcmA (217 aa).

The ABC transporter domain maps to 16–214 (LVLEQLSCER…AHGQAEVTEG (199 aa)). ATP is bound at residue 48 to 55 (GANGAGKT).

It belongs to the ABC transporter superfamily. CcmA exporter (TC 3.A.1.107) family. In terms of assembly, the complex is composed of two ATP-binding proteins (CcmA) and two transmembrane proteins (CcmB).

Its subcellular location is the cell inner membrane. It catalyses the reaction heme b(in) + ATP + H2O = heme b(out) + ADP + phosphate + H(+). Its function is as follows. Part of the ABC transporter complex CcmAB involved in the biogenesis of c-type cytochromes; once thought to export heme, this seems not to be the case, but its exact role is uncertain. Responsible for energy coupling to the transport system. This chain is Cytochrome c biogenesis ATP-binding export protein CcmA, found in Alcanivorax borkumensis (strain ATCC 700651 / DSM 11573 / NCIMB 13689 / SK2).